Consider the following 46-residue polypeptide: Large ribosomal subunit protein bL34 (46 aa).

The tract at residues 25-46 is disordered; the sequence is TASGRQVLRRRRAKGRYRLAVS. Positions 31–46 are enriched in basic residues; that stretch reads VLRRRRAKGRYRLAVS.

This sequence belongs to the bacterial ribosomal protein bL34 family.

The sequence is that of Large ribosomal subunit protein bL34 from Synechococcus sp. (strain JA-3-3Ab) (Cyanobacteria bacterium Yellowstone A-Prime).